Reading from the N-terminus, the 195-residue chain is Small ribosomal subunit protein eS7 (195 aa).

A phosphothreonine mark is found at Thr146 and Thr151. Residues Ser172 and Ser173 each carry the phosphoserine modification.

It belongs to the eukaryotic ribosomal protein eS7 family. Component of the small ribosomal subunit (SSU). Mature yeast ribosomes consist of a small (40S) and a large (60S) subunit. The 40S small subunit contains 1 molecule of ribosomal RNA (18S rRNA) and at least 33 different proteins. The large 60S subunit contains 3 rRNA molecules (25S, 5.8S and 5S rRNA) and at least 46 different proteins. Interacts with snoRNA U3. uS11 interacts with MPP10. Component of the ribosomal small subunit (SSU) processome composed of at least 40 protein subunits and snoRNA U3.

Its subcellular location is the cytoplasm. The protein resides in the nucleus. The protein localises to the nucleolus. Functionally, component of the ribosome, a large ribonucleoprotein complex responsible for the synthesis of proteins in the cell. The small ribosomal subunit (SSU) binds messenger RNAs (mRNAs) and translates the encoded message by selecting cognate aminoacyl-transfer RNA (tRNA) molecules. The large subunit (LSU) contains the ribosomal catalytic site termed the peptidyl transferase center (PTC), which catalyzes the formation of peptide bonds, thereby polymerizing the amino acids delivered by tRNAs into a polypeptide chain. The nascent polypeptides leave the ribosome through a tunnel in the LSU and interact with protein factors that function in enzymatic processing, targeting, and the membrane insertion of nascent chains at the exit of the ribosomal tunnel. eS7 is involved in nucleolar processing of pre-18S ribosomal RNA and ribosome assembly. This chain is Small ribosomal subunit protein eS7 (rps7), found in Schizosaccharomyces pombe (strain 972 / ATCC 24843) (Fission yeast).